The following is a 45-amino-acid chain: MTKRTLGGTSRKRKRVSGFRVRMRSHTGRRVIRTRRKRGRSRLAV.

Positions 1–45 (MTKRTLGGTSRKRKRVSGFRVRMRSHTGRRVIRTRRKRGRSRLAV) are disordered. The segment covering 10–45 (SRKRKRVSGFRVRMRSHTGRRVIRTRRKRGRSRLAV) has biased composition (basic residues).

The protein belongs to the bacterial ribosomal protein bL34 family.

The protein is Large ribosomal subunit protein bL34 of Parasynechococcus marenigrum (strain WH8102).